Reading from the N-terminus, the 468-residue chain is Glycine--tRNA ligase (468 aa).

Substrate is bound by residues Arg-101 and Glu-170. Residues 202–204 (RNE), 212–217 (FRTREF), 289–290 (EL), and 333–336 (GLTR) contribute to the ATP site. 217–221 (FEQME) serves as a coordination point for substrate. 329–333 (EPAAG) contributes to the substrate binding site.

It belongs to the class-II aminoacyl-tRNA synthetase family. Homodimer.

The protein resides in the cytoplasm. It carries out the reaction tRNA(Gly) + glycine + ATP = glycyl-tRNA(Gly) + AMP + diphosphate. Functionally, catalyzes the attachment of glycine to tRNA(Gly). The polypeptide is Glycine--tRNA ligase (Mycolicibacterium vanbaalenii (strain DSM 7251 / JCM 13017 / BCRC 16820 / KCTC 9966 / NRRL B-24157 / PYR-1) (Mycobacterium vanbaalenii)).